The following is a 539-amino-acid chain: uncharacterized protein (539 aa).

ABC transporter domains lie at leucine 9–lysine 276 and isoleucine 288–phenylalanine 536. Residues glycine 41 to serine 48 and glycine 325 to threonine 332 contribute to the ATP site.

This sequence belongs to the ABC transporter superfamily.

This is an uncharacterized protein from Methanocaldococcus jannaschii (strain ATCC 43067 / DSM 2661 / JAL-1 / JCM 10045 / NBRC 100440) (Methanococcus jannaschii).